Here is an 895-residue protein sequence, read N- to C-terminus: Stonin-2 (895 aa).

Disordered stretches follow at residues Thr-10–Asn-101, Ala-144–Ile-204, and Asn-236–Thr-279. Residues Ser-64–Glu-73 are compositionally biased toward basic and acidic residues. Composition is skewed to polar residues over residues Ser-145–Gln-169 and Gly-179–Leu-193. Residues Ser-278, Ser-284, and Ser-299 each carry the phosphoserine modification. Disordered stretches follow at residues Ile-291 to Asn-326 and Gln-386 to Gly-424. 2 short sequence motifs (NPF) span residues Asn-310 to Phe-312 and Asn-326 to Phe-328. The segment covering Pro-311 to Ser-323 has biased composition (polar residues). The 134-residue stretch at Gly-424–Ser-557 folds into the SHD domain. Positions Glu-565–Glu-872 constitute an MHD domain. Phosphoserine is present on Ser-759.

This sequence belongs to the Stoned B family. In terms of assembly, interacts with the second C2 domain of synaptotagmins SYT1 and SYT2. Interacts with EPS15, EPS15R and ITSN1. Interacts indirectly with the AP-2 adapter complex. Interacts with TOR1A and COPS4; the interaction controls STON2 protein stability. Post-translationally, phosphorylated in vitro by PKD. In terms of processing, neddylated and ubiquitinated; leading to its degradation and inhibited by TOR1A and COPS4.

Its subcellular location is the synapse. The protein resides in the synaptosome. It is found in the cytoplasm. It localises to the membrane. Its function is as follows. Adapter protein involved in endocytic machinery. Involved in the synaptic vesicle recycling. May facilitate clathrin-coated vesicle uncoating. This Rattus norvegicus (Rat) protein is Stonin-2 (Ston2).